Consider the following 246-residue polypeptide: Probable transcriptional regulatory protein YebC (246 aa).

A disordered region spans residues 1–20 (MAGHSKWANTRHRKAAQDAK).

Belongs to the TACO1 family.

It is found in the cytoplasm. This is Probable transcriptional regulatory protein YebC from Escherichia coli O6:K15:H31 (strain 536 / UPEC).